The primary structure comprises 398 residues: NADH-quinone oxidoreductase subunit D (398 aa).

This sequence belongs to the complex I 49 kDa subunit family. NDH-1 is composed of 14 different subunits. Subunits NuoB, C, D, E, F, and G constitute the peripheral sector of the complex.

The protein localises to the cell inner membrane. It carries out the reaction a quinone + NADH + 5 H(+)(in) = a quinol + NAD(+) + 4 H(+)(out). Its function is as follows. NDH-1 shuttles electrons from NADH, via FMN and iron-sulfur (Fe-S) centers, to quinones in the respiratory chain. The immediate electron acceptor for the enzyme in this species is believed to be ubiquinone. Couples the redox reaction to proton translocation (for every two electrons transferred, four hydrogen ions are translocated across the cytoplasmic membrane), and thus conserves the redox energy in a proton gradient. In Bradyrhizobium sp. (strain BTAi1 / ATCC BAA-1182), this protein is NADH-quinone oxidoreductase subunit D.